The sequence spans 356 residues: Peptide chain release factor 1 (356 aa).

An N5-methylglutamine modification is found at glutamine 235.

Belongs to the prokaryotic/mitochondrial release factor family. Methylated by PrmC. Methylation increases the termination efficiency of RF1.

Its subcellular location is the cytoplasm. Peptide chain release factor 1 directs the termination of translation in response to the peptide chain termination codons UAG and UAA. The protein is Peptide chain release factor 1 of Hydrogenobaculum sp. (strain Y04AAS1).